The following is a 310-amino-acid chain: Porphobilinogen deaminase (310 aa).

Cys-242 is modified (S-(dipyrrolylmethanemethyl)cysteine).

It belongs to the HMBS family. As to quaternary structure, monomer. Dipyrromethane serves as cofactor.

The catalysed reaction is 4 porphobilinogen + H2O = hydroxymethylbilane + 4 NH4(+). The protein operates within porphyrin-containing compound metabolism; protoporphyrin-IX biosynthesis; coproporphyrinogen-III from 5-aminolevulinate: step 2/4. Functionally, tetrapolymerization of the monopyrrole PBG into the hydroxymethylbilane pre-uroporphyrinogen in several discrete steps. The chain is Porphobilinogen deaminase from Shewanella sp. (strain W3-18-1).